The following is a 488-amino-acid chain: Tetratricopeptide repeat protein 23 (488 aa).

TPR repeat units lie at residues 45 to 78, 137 to 170, 186 to 219, 228 to 261, and 398 to 431; these read LHLC…TRIC, LELF…SKEM, SRIK…TEIT, VQVL…TPQP, and AETY…ETFL.

In terms of assembly, associated with the EvC complex composed of EFCAB7, IQCE, EVC2 and EVC.

Its subcellular location is the cell projection. The protein resides in the cilium. In terms of biological role, participates positively in the ciliary Hedgehog (Hh) signaling. The polypeptide is Tetratricopeptide repeat protein 23 (Ttc23) (Mus musculus (Mouse)).